Here is a 443-residue protein sequence, read N- to C-terminus: Probable lipase C16A3.12c (443 aa).

Over 1 to 16 the chain is Cytoplasmic; it reads MSGFNKNQIYWGDYVG. A helical; Signal-anchor for type II membrane protein transmembrane segment spans residues 17–37; that stretch reads VIAAFVGVYTELVARIFIYMI. At 38–443 the chain is on the lumenal side; sequence PERVREWFRV…KHFVKQNGFH (406 aa). The 295-residue stretch at 116-410 folds into the AB hydrolase-1 domain; it reads VVYCHHGLMT…HYEHLDFLWG (295 aa). N-linked (GlcNAc...) asparagine glycans are attached at residues N134 and N177. S210 functions as the Nucleophile in the catalytic mechanism. 2 N-linked (GlcNAc...) asparagine glycosylation sites follow: N304 and N335. Catalysis depends on charge relay system residues D378 and H404.

It belongs to the AB hydrolase superfamily. Lipase family.

It localises to the cytoplasm. The protein resides in the vacuole. The protein localises to the membrane. Its function is as follows. Probable lipase. This Schizosaccharomyces pombe (strain 972 / ATCC 24843) (Fission yeast) protein is Probable lipase C16A3.12c.